Consider the following 425-residue polypeptide: Trigger factor (425 aa).

The PPIase FKBP-type domain occupies 163 to 248 (GDTAVIDFEG…IHEIKTKELP (86 aa)).

The protein belongs to the FKBP-type PPIase family. Tig subfamily.

The protein resides in the cytoplasm. The catalysed reaction is [protein]-peptidylproline (omega=180) = [protein]-peptidylproline (omega=0). Functionally, involved in protein export. Acts as a chaperone by maintaining the newly synthesized protein in an open conformation. Functions as a peptidyl-prolyl cis-trans isomerase. The chain is Trigger factor from Bacillus mycoides (strain KBAB4) (Bacillus weihenstephanensis).